Consider the following 236-residue polypeptide: HTH-type transcriptional regulator SACE_5812 (236 aa).

The HTH tetR-type domain maps to 30–90 (LLTQDKIVSA…LALDAVFGEV (61 aa)). Residues 53–72 (SMRKLADRLQAHATSLYWHV) constitute a DNA-binding region (H-T-H motif).

Functionally, transcriptional regulator that inhibits erythromycin production. Directly represses the expression of SACE_5813, eryAI (encoding polyketide synthase I) and ermE (encoding rRNA methyltransferase), suggesting its direct regulation of the erythromycin biosynthesis gene cluster. May play an important role in regulating secondary metabolism in actinomycetes. This is HTH-type transcriptional regulator SACE_5812 from Saccharopolyspora erythraea (strain ATCC 11635 / DSM 40517 / JCM 4748 / NBRC 13426 / NCIMB 8594 / NRRL 2338).